Reading from the N-terminus, the 265-residue chain is Probable FAD synthase (265 aa).

Belongs to the PAPS reductase family. FAD1 subfamily.

It catalyses the reaction FMN + ATP + H(+) = FAD + diphosphate. It participates in cofactor biosynthesis; FAD biosynthesis; FAD from FMN: step 1/1. In terms of biological role, adenylates FMN to FAD. In Schizosaccharomyces pombe (strain 972 / ATCC 24843) (Fission yeast), this protein is Probable FAD synthase.